Consider the following 254-residue polypeptide: Small ribosomal subunit protein uS2 (254 aa).

The protein belongs to the universal ribosomal protein uS2 family.

The polypeptide is Small ribosomal subunit protein uS2 (Legionella pneumophila (strain Corby)).